The following is a 340-amino-acid chain: MANPLISNHIGKHGKYTQAFLEQNGPGDARPTALDILKDNDRIDNMKDKVFLLTGSSGGIGIETGRALAATGGKVYLGVRDLEKGKQALAEILEPGRVELLELDVGSMESVRTAAKTFLSKSTQLNVLVNNAGIMACPEAKTVDGFESQLAINYLGHFLLYKLLEQTLLSSSTPEFQSRVVNVSSAGHHMSSVVLDNINLEGEYEPWKAYGNAKTACIWMTNEIEHRYGSKGLHGLSLMPGGIATSLQRHVDPETLKEWGSSEFAQKYAKSSAQGAATTITAALGKEWEGKGGVYLEDCQEAGPVPEGGTLAVGVAPHAFDPEGEKKLWDLSLKMLNLSE.

NADP(+) is bound by residues Ile-60, Lys-84, Asp-104, Asn-131, and Lys-162. Ser-184 functions as the Proton donor in the catalytic mechanism. Tyr-210 and Lys-214 together coordinate NADP(+). Tyr-210 acts as the Proton acceptor in catalysis. Lys-214 acts as the Lowers pKa of active site Tyr in catalysis.

Belongs to the short-chain dehydrogenases/reductases (SDR) family.

It participates in sesquiterpene biosynthesis. Functionally, short-chain dehydrogenase/reductase; part of the gene cluster that mediates the biosynthesis of PR-toxin, a bicyclic sesquiterpene belonging to the eremophilane class and acting as a mycotoxin. The first step of the pathway is catalyzed by the aristolochene synthase which performs the cyclization of trans,trans-farnesyl diphosphate (FPP) to the bicyclic sesquiterpene aristolochene. Following the formation of aristolochene, the non-oxygenated aristolochene is converted to the trioxygenated intermediate eremofortin B, via 7-epi-neopetasone. This conversion appears to involve three enzymes, a hydroxysterol oxidase-like enzyme, the quinone-oxidase prx3 that forms the quinone-type-structure in the bicyclic nucleus of aristolochene with the C8-oxo group and the C-3 hydroxyl group, and the P450 monooxygenase ORF6 that introduces the epoxide at the double bond between carbons 1 and 2. No monoxy or dioxy-intermediates have been reported to be released to the broth, so these three early oxidative reactions may be coupled together. Eremofortin B is further oxidized by another P450 monooxygenase, that introduces a second epoxide between carbons 7 and 11 prior to acetylation to eremofortin A by the acetyltransferase ORF8. The second epoxidation may be performed by a second P450 monooxygenase. After the acetylation step, eremofortin A is converted to eremofortin C and then to PR-toxin. First the conversion of eremofortin A to eremofortin C proceeds by oxidation of the side chain of the molecule at C-12 and is catalyzed by the short-chain oxidoreductase prx1. The cytochrome P450 monooxygenase ORF6 is probably also involved in this step. The primary alcohol formed at C-12 is finally oxidized by the short-chain alcohol dehydrogenase prx4 that forms PR-toxin. In Penicillium roqueforti (strain FM164), this protein is Short-chain dehydrogenase/reductase prx1.